The following is a 207-amino-acid chain: MAKGLIGEKLGMAHIFNNDGKMVTVTVLRVGPCFVSQVKTEANDGYEAVQLAFGDAKEKHLTKAELGHIKKANIATPKKTLVEFKGFEGVAVGSEVKLADIFALDDTVKVTGTSKGKGTQGVVKRHGFAGGPAGHGSRFQRHPGSIGSNTTPGRVFKGLKMGGRMGSEQTTVRNLKVVKIDADANLVFVSGPVPGRERGIVTIEKIG.

The interval 129 to 152 is disordered; it reads AGGPAGHGSRFQRHPGSIGSNTTP.

The protein belongs to the universal ribosomal protein uL3 family. As to quaternary structure, part of the 50S ribosomal subunit. Forms a cluster with proteins L14 and L19.

Its function is as follows. One of the primary rRNA binding proteins, it binds directly near the 3'-end of the 23S rRNA, where it nucleates assembly of the 50S subunit. This is Large ribosomal subunit protein uL3 from Leptospira biflexa serovar Patoc (strain Patoc 1 / ATCC 23582 / Paris).